The following is a 1481-amino-acid chain: Cystic fibrosis transmembrane conductance regulator (1481 aa).

The Cytoplasmic segment spans residues 1–77; it reads MQRSPLEKAS…KLINALRRCF (77 aa). The helical transmembrane segment at 78–98 threads the bilayer; that stretch reads FWRFMFYGIILYLGEVTKAVQ. The ABC transmembrane type-1 1 domain occupies 81–365; sequence FMFYGIILYL…WAVQTWYDSL (285 aa). The Extracellular segment spans residues 99–122; sequence PLLLGRIIASYDPDNKVERSIAIY. Residues 123–146 traverse the membrane as a helical segment; it reads LGIGLCLLFIVRTLLLHPAIFGLH. The Cytoplasmic segment spans residues 147-195; the sequence is HIGMQMRIAMFSLIYKKTLKLSSRVLDKISIGQLVSLLSNNLNKFDEGL. The chain crosses the membrane as a helical span at residues 196-216; it reads ALAHFVWIAPLQVTLLMGLLW. At 217–222 the chain is on the extracellular side; the sequence is ELLQAF. A helical transmembrane segment spans residues 223–243; that stretch reads TFCGLAFLIVLALLQAGLGKM. The Cytoplasmic portion of the chain corresponds to 244-298; the sequence is MMKYRDQRAGKINERLVITSEMIENIQSVKAYCWEEAMEKIIENLRQTELKLTRK. Residues 299-319 form a helical membrane-spanning segment; it reads AAYVRYLNSSAFFFSGFFVVF. Residues 320–339 lie on the Extracellular side of the membrane; it reads LSVLPYALLKGIILRKIFTT. The helical transmembrane segment at 340 to 358 threads the bilayer; that stretch reads ISFCIVLRMAVTRQFPWAV. Residues 359–858 lie on the Cytoplasmic side of the membrane; it reads QTWYDSLGAI…YLRYITVHKS (500 aa). ATP contacts are provided by residues tryptophan 401, 457 to 464, and glutamine 492; that span reads GSTGAGKT. The ABC transporter 1 domain occupies 423–645; that stretch reads NGDNSLFFSN…RPDFSSKLMG (223 aa). The S-palmitoyl cysteine moiety is linked to residue cysteine 523. Phosphoserine is present on serine 548. Residues 653 to 831 are disordered R region; it reads TAERRNSIIT…EEINEEDLRD (179 aa). Residues serine 659 and serine 669 each carry the phosphoserine; by PKA modification. At serine 685 the chain carries Phosphoserine; by PKC. Lysine 687 is covalently cross-linked (Glycyl lysine isopeptide (Lys-Gly) (interchain with G-Cter in ubiquitin)). Phosphoserine; by PKA is present on serine 699. Phosphoserine is present on serine 711. A Phosphothreonine modification is found at threonine 716. A phosphoserine; by PKA mark is found at serine 736 and serine 767. Serine 790 is subject to Phosphoserine; by PKC. Serine 795 and serine 813 each carry phosphoserine; by PKA. Residues 859-879 traverse the membrane as a helical segment; sequence LMFVLIWCLVVFLVEVAASLV. The ABC transmembrane type-1 2 domain maps to 859–1155; it reads LMFVLIWCLV…AVNSSIDVDS (297 aa). Residues 880–918 lie on the Extracellular side of the membrane; the sequence is VLCLFPKIFFQDKGNSTKSANNSYAVIITSTSSYYIFYI. Residues asparagine 894 and asparagine 900 are each glycosylated (N-linked (GlcNAc...) asparagine). The discontinuously helical transmembrane segment at 919–939 threads the bilayer; sequence YVGVADTLLALGLFRGLPLVH. Over 940–990 the chain is Cytoplasmic; the sequence is TLITVSKTLHHKMLQSVLQAPMSTLNTLKTGGILNRFSKDIAVLDDLLPLT. Residues 991–1011 form a helical membrane-spanning segment; that stretch reads IFDFVQLLLIVIGAVVVVSVL. The Extracellular segment spans residues 1012–1013; that stretch reads QP. A helical membrane pass occupies residues 1014 to 1034; that stretch reads YIFLATVPVIAAFILLRAYFL. The Cytoplasmic segment spans residues 1035–1095; it reads HTSQQLKQLE…TANWFLYLST (61 aa). A helical transmembrane segment spans residues 1096 to 1116; it reads LRWFQMRIEMIFVIFFIAVTF. Topologically, residues 1117–1130 are extracellular; sequence ISILTTGEGEGRVG. The helical transmembrane segment at 1131 to 1151 threads the bilayer; sequence IILTLAMNIMGTLQWAVNSSI. Topologically, residues 1152–1481 are cytoplasmic; sequence DVDSLMRSVS…TEEEVQETKL (330 aa). Residues 1211-1444 form the ABC transporter 2 domain; that stretch reads MTVKDLTAKY…KSLFRQAISP (234 aa). ATP contacts are provided by residues tyrosine 1220 and 1245–1252; that span reads GRTGSGKS. The interval 1387 to 1481 is interaction with GORASP2; the sequence is RTLKQAFANC…TEEEVQETKL (95 aa). Residue cysteine 1396 is the site of S-palmitoyl cysteine attachment. Positions 1453-1481 are disordered; the sequence is HRNSSRQRSRSNIAALKEETEEEVQETKL. A Phosphoserine modification is found at serine 1457. The segment covering 1471-1481 has biased composition (acidic residues); that stretch reads ETEEEVQETKL. The PDZ-binding signature appears at 1479-1481; sequence TKL.

This sequence belongs to the ABC transporter superfamily. ABCC family. CFTR transporter (TC 3.A.1.202) subfamily. In terms of assembly, monomer; does not require oligomerization for channel activity. May form oligomers in the membrane. Interacts with SLC26A3, SLC26A6 and NHERF1. Interacts with SHANK2. Interacts with MYO6. Interacts (via C-terminus) with GOPC (via PDZ domain); this promotes CFTR internalization and thereby decreases channel activity. Interacts with SLC4A7 through NHERF1. Found in a complex with MYO5B and RAB11A. Interacts with ANO1. Interacts with SLC26A8. Interacts with AHCYL1; the interaction increases CFTR activity. Interacts with CSE1L. The core-glycosylated form interacts with GORASP2 (via PDZ GRASP-type 1 domain) in respone to ER stress. Interacts with MARCHF2; the interaction leads to CFTR ubiqtuitination and degradation. Interacts with ADGRG2. Post-translationally, N-glycosylated. Phosphorylated; cAMP treatment promotes phosphorylation and activates the channel. Dephosphorylation decreases the ATPase activity (in vitro). Phosphorylation at PKA sites activates the channel. Phosphorylation at PKC sites enhances the response to phosphorylation by PKA. Phosphorylated by AMPK; this inhibits channel activity. In terms of processing, ubiquitinated, leading to its degradation in the lysosome. Deubiquitination by USP10 in early endosomes enhances its endocytic recycling to the cell membrane. Ubiquitinated by RNF185 during ER stress. Ubiquitinated by MARCHF2.

It is found in the apical cell membrane. The protein resides in the early endosome membrane. Its subcellular location is the cell membrane. The protein localises to the recycling endosome membrane. It localises to the endoplasmic reticulum membrane. It is found in the nucleus. The catalysed reaction is ATP + H2O + closed Cl(-) channel = ADP + phosphate + open Cl(-) channel.. The enzyme catalyses chloride(in) = chloride(out). It catalyses the reaction hydrogencarbonate(in) = hydrogencarbonate(out). It carries out the reaction ATP + H2O = ADP + phosphate + H(+). In terms of biological role, epithelial ion channel that plays an important role in the regulation of epithelial ion and water transport and fluid homeostasis. Mediates the transport of chloride ions across the cell membrane. Possesses an intrinsic ATPase activity and utilizes ATP to gate its channel; the passive flow of anions through the channel is gated by cycles of ATP binding and hydrolysis by the ATP-binding domains. The ion channel is also permeable to HCO(3)(-); selectivity depends on the extracellular chloride concentration. Exerts its function also by modulating the activity of other ion channels and transporters. Contributes to the regulation of the pH and the ion content of the epithelial fluid layer. Modulates the activity of the epithelial sodium channel (ENaC) complex, in part by regulating the cell surface expression of the ENaC complex. May regulate bicarbonate secretion and salvage in epithelial cells by regulating the transporter SLC4A7. Can inhibit the chloride channel activity of ANO1. Plays a role in the chloride and bicarbonate homeostasis during sperm epididymal maturation and capacitation. This is Cystic fibrosis transmembrane conductance regulator from Bos taurus (Bovine).